The primary structure comprises 444 residues: Enolase (444 aa).

Substrate contacts are provided by His-163 and Glu-172. Glu-215 functions as the Proton donor in the catalytic mechanism. Positions 250, 300, and 327 each coordinate Mg(2+). Substrate contacts are provided by Glu-300 and Asp-327. Residue Lys-352 is the Proton acceptor of the active site. Residues 379–382 (SHRS) and Lys-403 contribute to the substrate site.

Belongs to the enolase family. As to quaternary structure, homodimer. It depends on Mg(2+) as a cofactor.

It localises to the cytoplasm. The enzyme catalyses (2R)-2-phosphoglycerate = phosphoenolpyruvate + H2O. It participates in carbohydrate degradation; glycolysis; pyruvate from D-glyceraldehyde 3-phosphate: step 4/5. This is Enolase (PGH1) from Solanum lycopersicum (Tomato).